Reading from the N-terminus, the 321-residue chain is Beta-1,3-N-acetylglucosaminyltransferase manic fringe (321 aa).

At 1-7 the chain is on the cytoplasmic side; that stretch reads MQCRLPR. Residues 8-27 traverse the membrane as a helical; Signal-anchor for type II membrane protein segment; sequence GLAGALLTLLCMGLLCLRYH. Topologically, residues 28 to 321 are lumenal; the sequence is LNLSPQRVQG…TPWCPQLGAR (294 aa). R70 serves as a coordination point for substrate. N109 is a glycosylation site (N-linked (GlcNAc...) asparagine). 2 disulfide bridges follow: C110–C121 and C139–C202. A substrate-binding site is contributed by D143. D144 lines the Mn(2+) pocket. N-linked (GlcNAc...) asparagine glycosylation is present at N185. D232 is a catalytic residue. H256 is a Mn(2+) binding site. C306 and C315 form a disulfide bridge.

Belongs to the glycosyltransferase 31 family. Mn(2+) is required as a cofactor.

Its subcellular location is the golgi apparatus membrane. It carries out the reaction 3-O-(alpha-L-fucosyl)-L-threonyl-[EGF-like domain protein] + UDP-N-acetyl-alpha-D-glucosamine = 3-O-(N-acetyl-beta-D-glucosaminyl-(1-&gt;3)-alpha-L-fucosyl)-L-threonyl-[EGF-like domain protein] + UDP + H(+). The catalysed reaction is 3-O-(alpha-L-fucosyl)-L-seryl-[EGF-like domain protein] + UDP-N-acetyl-alpha-D-glucosamine = 3-O-(N-acetyl-beta-D-glucosaminyl-(1-&gt;3)-alpha-L-fucosyl)-L-seryl-[EGF-like domain protein] + UDP + H(+). Glycosyltransferase that initiates the elongation of O-linked fucose residues attached to EGF-like repeats in the extracellular domain of Notch molecules. Modulates NOTCH1 activity by modifying O-fucose residues at specific EGF-like domains resulting in inhibition of NOTCH1 activation by JAG1 and enhancement of NOTCH1 activation by DLL1 via an increase in its binding to DLL1. This is Beta-1,3-N-acetylglucosaminyltransferase manic fringe from Homo sapiens (Human).